We begin with the raw amino-acid sequence, 291 residues long: MMRIILFLLTNLAVVCVFGFILSFTKIPPESISGLLIFSSIFGFSGSIISLLMSKWIALKSVNGQVIYQPSNNTEQWLIDTINSQSKKMGIKTPTIAIYHAFDMNAFATGAYKNSALIAVSTGLLENMSYDEAEAVLAHEINHISNGDMVTMTLVQGIVNTFVIFISRIIAQFASSILSENREDNNSNRNTWVYIICSTILELIFGIFASIITMWFSRHREFYADAGSAKLVGRKKMISALQKLKLSYEPQEKSNIIAFCINGKHSSFLNLFMSHPSLDKRIQALYNRDYM.

A run of 2 helical transmembrane segments spans residues I4 to F24 and I32 to L52. H139 is a binding site for Zn(2+). Residue E140 is part of the active site. H143 contributes to the Zn(2+) binding site. The next 2 membrane-spanning stretches (helical) occupy residues I158–L178 and W192–I212. E221 contributes to the Zn(2+) binding site.

The protein belongs to the peptidase M48B family. Zn(2+) is required as a cofactor.

Its subcellular location is the cell membrane. The polypeptide is Protease HtpX (Buchnera aphidicola subsp. Baizongia pistaciae (strain Bp)).